The primary structure comprises 722 residues: Glycine--tRNA ligase beta subunit (722 aa).

It belongs to the class-II aminoacyl-tRNA synthetase family. Tetramer of two alpha and two beta subunits.

It localises to the cytoplasm. It catalyses the reaction tRNA(Gly) + glycine + ATP = glycyl-tRNA(Gly) + AMP + diphosphate. The polypeptide is Glycine--tRNA ligase beta subunit (Xylella fastidiosa (strain Temecula1 / ATCC 700964)).